The following is a 366-amino-acid chain: Probable quinol oxidase subunit 2 (366 aa).

Residues 1-19 (MSKFKSLLLLFGTLILLSG) form the signal peptide. Cys20 is lipidated: N-palmitoyl cysteine. Residue Cys20 is the site of S-diacylglycerol cysteine attachment. The next 2 helical transmembrane spans lie at 38–58 (FLILYSIVFMLVICFVVLGMF) and 80–100 (AIIETIWFVIPIIIVAALAIP). Positions 330-366 (EPYNNEFKKDESKNAKEMKKISKDAQDQDNDDHGGGH) are disordered. Residues 335 to 366 (EFKKDESKNAKEMKKISKDAQDQDNDDHGGGH) are compositionally biased toward basic and acidic residues.

Belongs to the cytochrome c oxidase subunit 2 family.

Its subcellular location is the cell membrane. It carries out the reaction 2 a quinol + O2 = 2 a quinone + 2 H2O. Functionally, catalyzes quinol oxidation with the concomitant reduction of oxygen to water. Subunit II transfers the electrons from a quinol to the binuclear center of the catalytic subunit I. This is Probable quinol oxidase subunit 2 (qoxA) from Staphylococcus aureus (strain bovine RF122 / ET3-1).